Here is a 124-residue protein sequence, read N- to C-terminus: S-adenosylmethionine decarboxylase proenzyme (124 aa).

Catalysis depends on Ser70, which acts as the Schiff-base intermediate with substrate; via pyruvic acid. Ser70 is subject to Pyruvic acid (Ser); by autocatalysis. The active-site Proton acceptor; for processing activity is the His75. The Proton donor; for catalytic activity role is filled by Cys90.

This sequence belongs to the prokaryotic AdoMetDC family. Type 1 subfamily. Heterotetramer of two alpha and two beta chains arranged as a dimer of alpha/beta heterodimers. Pyruvate is required as a cofactor. Post-translationally, is synthesized initially as an inactive proenzyme. Formation of the active enzyme involves a self-maturation process in which the active site pyruvoyl group is generated from an internal serine residue via an autocatalytic post-translational modification. Two non-identical subunits are generated from the proenzyme in this reaction, and the pyruvate is formed at the N-terminus of the alpha chain, which is derived from the carboxyl end of the proenzyme. The post-translation cleavage follows an unusual pathway, termed non-hydrolytic serinolysis, in which the side chain hydroxyl group of the serine supplies its oxygen atom to form the C-terminus of the beta chain, while the remainder of the serine residue undergoes an oxidative deamination to produce ammonia and the pyruvoyl group blocking the N-terminus of the alpha chain.

The catalysed reaction is S-adenosyl-L-methionine + H(+) = S-adenosyl 3-(methylsulfanyl)propylamine + CO2. It functions in the pathway amine and polyamine biosynthesis; S-adenosylmethioninamine biosynthesis; S-adenosylmethioninamine from S-adenosyl-L-methionine: step 1/1. Catalyzes the decarboxylation of S-adenosylmethionine to S-adenosylmethioninamine (dcAdoMet), the propylamine donor required for the synthesis of the polyamines spermine and spermidine from the diamine putrescine. This is S-adenosylmethionine decarboxylase proenzyme from Pyrobaculum neutrophilum (strain DSM 2338 / JCM 9278 / NBRC 100436 / V24Sta) (Thermoproteus neutrophilus).